Reading from the N-terminus, the 576-residue chain is MAGUK p55 subfamily member 7 (576 aa).

L27 domains follow at residues 10–64 (SEMG…EDCA) and 65–122 (PTPV…YDPE). The PDZ domain occupies 139-220 (IIRLVKNKEP…AITFKVVPGI (82 aa)). The SH3 domain maps to 228–298 (EPKMFIKALF…PSKHFQERRL (71 aa)). Residues 368–560 (HRLVVLVGPT…AFSELKQALK (193 aa)) form the Guanylate kinase-like domain.

It belongs to the MAGUK family.

It localises to the membrane. The protein localises to the cell junction. The protein resides in the tight junction. Its subcellular location is the adherens junction. In terms of biological role, acts as an important adapter that promotes epithelial cell polarity and tight junction formation. Involved in the assembly of protein complexes at sites of cell-cell contact. This chain is MAGUK p55 subfamily member 7 (mpp7), found in Danio rerio (Zebrafish).